A 160-amino-acid polypeptide reads, in one-letter code: Crossover junction endodeoxyribonuclease RuvC (160 aa).

Active-site residues include aspartate 9, glutamate 68, and aspartate 141. The Mg(2+) site is built by aspartate 9, glutamate 68, and aspartate 141.

It belongs to the RuvC family. In terms of assembly, homodimer which binds Holliday junction (HJ) DNA. The HJ becomes 2-fold symmetrical on binding to RuvC with unstacked arms; it has a different conformation from HJ DNA in complex with RuvA. In the full resolvosome a probable DNA-RuvA(4)-RuvB(12)-RuvC(2) complex forms which resolves the HJ. Requires Mg(2+) as cofactor.

The protein localises to the cytoplasm. It catalyses the reaction Endonucleolytic cleavage at a junction such as a reciprocal single-stranded crossover between two homologous DNA duplexes (Holliday junction).. In terms of biological role, the RuvA-RuvB-RuvC complex processes Holliday junction (HJ) DNA during genetic recombination and DNA repair. Endonuclease that resolves HJ intermediates. Cleaves cruciform DNA by making single-stranded nicks across the HJ at symmetrical positions within the homologous arms, yielding a 5'-phosphate and a 3'-hydroxyl group; requires a central core of homology in the junction. The consensus cleavage sequence is 5'-(A/T)TT(C/G)-3'. Cleavage occurs on the 3'-side of the TT dinucleotide at the point of strand exchange. HJ branch migration catalyzed by RuvA-RuvB allows RuvC to scan DNA until it finds its consensus sequence, where it cleaves and resolves the cruciform DNA. In Campylobacter jejuni (strain RM1221), this protein is Crossover junction endodeoxyribonuclease RuvC.